The following is a 323-amino-acid chain: Palmitoyltransferase ZDHHC20-B (323 aa).

At 1-14 (MAPTHVLRCCQRGL) the chain is on the cytoplasmic side. The chain crosses the membrane as a helical span at residues 15 to 35 (AWIPVIFIALVVCWSYYAYVV). Residues 36-41 (ELCLLV) are Lumenal-facing. Residues 42–62 (YLVVFHLSFVMFVWSYWKTIF) form a helical membrane-spanning segment. The Cytoplasmic segment spans residues 63–157 (TKPANPSKEF…NNCVGFSNYK (95 aa)). The region spanning 114-164 (RYCDRCQVIKPDRCHHCSACDMCVLKMDHHCPWVNNCVGFSNYKFFILFLT) is the DHHC domain. Cys144 serves as the catalytic S-palmitoyl cysteine intermediate. The helical transmembrane segment at 158–178 (FFILFLTYSLVYCLFIAASVL) threads the bilayer. The Lumenal portion of the chain corresponds to 179-195 (QYFIKFWTSDLPESHAK). Residues 196 to 219 (FHVLFLFFVAAMFCISILSLFTYH) traverse the membrane as a helical segment. Residues 220-323 (LWLVGKNRST…KQAKKKKTDE (104 aa)) are Cytoplasmic-facing.

It belongs to the DHHC palmitoyltransferase family.

The protein resides in the golgi apparatus membrane. It is found in the cell membrane. The protein localises to the cytoplasm. Its subcellular location is the perinuclear region. It localises to the endoplasmic reticulum membrane. The protein resides in the endoplasmic reticulum-Golgi intermediate compartment membrane. It carries out the reaction L-cysteinyl-[protein] + hexadecanoyl-CoA = S-hexadecanoyl-L-cysteinyl-[protein] + CoA. The catalysed reaction is L-cysteinyl-[protein] + tetradecanoyl-CoA = S-tetradecanoyl-L-cysteinyl-[protein] + CoA. The enzyme catalyses L-cysteinyl-[protein] + octadecanoyl-CoA = S-octadecanoyl-L-cysteinyl-[protein] + CoA. Functionally, palmitoyltransferase that could catalyze the addition of palmitate onto various protein substrates. Catalyzes palmitoylation of Cys residues on protein substrates and has a preference for acyl-CoA with C16 fatty acid chains but may also utilize acyl-CoA with C14 and C18 fatty acid chains. In Danio rerio (Zebrafish), this protein is Palmitoyltransferase ZDHHC20-B (zdhhc20b).